The primary structure comprises 782 residues: Cyclic nucleotide-gated channel beta-3 (782 aa).

Disordered stretches follow at residues 1-111 (MFKS…PKSK) and 147-168 (GDISSPEASPQTAKPTAVPSTQ). Residues 1–213 (MFKSLTIKSN…SIDSYTDRLY (213 aa)) are Cytoplasmic-facing. Basic and acidic residues-rich tracts occupy residues 13–25 (KPREENDENKQDP) and 57–73 (EESHAKMQDKISEKNSL). Composition is skewed to polar residues over residues 74 to 83 (RDLTTNPNHQ) and 152 to 168 (PEASPQTAKPTAVPSTQ). The chain crosses the membrane as a helical span at residues 214-237 (LLWLLLVTIAYNWNCWLIPLRLVF). The Extracellular segment spans residues 238–244 (PYQTPDN). A helical membrane pass occupies residues 245-265 (THYWFITDITCDIIYLCDMLL). Over 266–294 (IQPRLQFIKGGDIMVDSNELKRHYRSSTK) the chain is Cytoplasmic. A helical transmembrane segment spans residues 295-312 (FQLDVASVMPFDVFYLFF). Over 313 to 315 (GFN) the chain is Extracellular. Residues 316–330 (PVFRMNRILKYTSFF) form a helical membrane-spanning segment. Over 331-343 (EFNHHLESIMDKA) the chain is Cytoplasmic. The segment at 343 to 442 (AYIYRVIRTT…IGQMQDVIGA (100 aa)) is ion conduction pathway. The helical transmembrane segment at 344 to 366 (YIYRVIRTTGYLLYTLHINACIY) threads the bilayer. Over 367–388 (YWASDYEGIGSTKWVYNGEGNK) the chain is Extracellular. Transmembrane regions (helical) follow at residues 389–415 (YLRCYYWAVRTLITIGGLPEPQTSFEI) and 416–440 (VFQLLNFFSGVFVFSSLIGQMQDVI). A selectivity filter region spans residues 402–405 (TIGG). Topologically, residues 441 to 782 (GAATANQNNF…TIEVKEKAKQ (342 aa)) are cytoplasmic. Residues 445 to 521 (ANQNNFRISM…SIISKVELFK (77 aa)) are C-linker. Positions 525-641 (TQMIYDMLLR…LLMKKASVLL (117 aa)) are cyclic nucleotide-binding domain. 4 residues coordinate 3',5'-cyclic GMP: G586, E587, R599, and T600. A disordered region spans residues 692–724 (EQTIQKTSENSEEGGGKRREYEDKEREPSEKIL). A compositionally biased stretch (basic and acidic residues) spans 705–724 (GGGKRREYEDKEREPSEKIL).

Belongs to the cyclic nucleotide-gated cation channel (TC 1.A.1.5) family. CNGB3 subfamily. As to quaternary structure, forms heterotetrameric channels composed of CNGA3 and CNGB3 subunits with 3:1 stoichiometry.

The protein resides in the cell membrane. The enzyme catalyses Ca(2+)(in) = Ca(2+)(out). It catalyses the reaction Na(+)(in) = Na(+)(out). The catalysed reaction is K(+)(in) = K(+)(out). It carries out the reaction NH4(+)(in) = NH4(+)(out). The enzyme catalyses Rb(+)(in) = Rb(+)(out). It catalyses the reaction Li(+)(in) = Li(+)(out). The catalysed reaction is Cs(+)(in) = Cs(+)(out). Functionally, pore-forming subunit of the cone cyclic nucleotide-gated channel. Mediates cone photoresponses at bright light converting transient changes in intracellular cGMP levels into electrical signals. In the dark, cGMP levels are high and keep the channel open enabling a steady inward current carried by Na(+) and Ca(2+) ions that leads to membrane depolarization and neurotransmitter release from synaptic terminals. Upon photon absorption cGMP levels decline leading to channel closure and membrane hyperpolarization that ultimately slows neurotransmitter release and signals the presence of light, the end point of the phototransduction cascade. Conducts cGMP- and cAMP-gated ion currents, with permeability for monovalent and divalent cations. The polypeptide is Cyclic nucleotide-gated channel beta-3 (Canis lupus familiaris (Dog)).